Reading from the N-terminus, the 391-residue chain is Adaptive-response sensory kinase SasA (391 aa).

Residues 169 to 391 (MLAHDLRSPL…CFHFTLPVCR (223 aa)) enclose the Histidine kinase domain. At His172 the chain carries Phosphohistidine; by autocatalysis.

As to quaternary structure, homooligomerizes. Interacts with KaiC. Participates in the KaiABC clock complex, whose core is composed of a KaiC homohexamer, 6 KaiB and up to 6 KaiA dimers. SasA and KaiB(fs) compete to bind to KaiC.

The catalysed reaction is ATP + protein L-histidine = ADP + protein N-phospho-L-histidine.. Member of the two-component regulatory system SasA/RpaA involved in genome-wide circadian gene expression. One of several clock output pathways. Participates in the Kai clock protein complex, the main circadian regulator in cyanobacteria, via its interaction with KaiC. KaiC enhances the autophosphorylation activity of SasA, which then transfers its phosphate group to RpaA to activate it. In addition to its output function, recruits fold-shifted KaiB (KaiB(fs)) to KaiC to cooperatively form the KaiB(6):KaiC(6) complex (independent of SasA kinase activity). Required for robustness of the circadian rhythm of gene expression and is involved in clock output, also required for adaptation to light/dark cycles. This chain is Adaptive-response sensory kinase SasA, found in Rippkaea orientalis (strain PCC 8801 / RF-1) (Cyanothece sp. (strain PCC 8801)).